Consider the following 518-residue polypeptide: WEB family protein At2g40480 (518 aa).

2 coiled-coil regions span residues 95–141 (DIKR…LQQE) and 188–219 (DNLV…AKLT). The tract at residues 303-337 (NGESQDDDSEFCFPEPPRSPVTPRGLRIDNDFSTD) is disordered. Over residues 328-337 (LRIDNDFSTD) the composition is skewed to basic and acidic residues. A coiled-coil region spans residues 344–375 (ILKKLEEATEGVKQSKQALEAALNRVEIANVK).

This sequence belongs to the WEB family.

This chain is WEB family protein At2g40480, found in Arabidopsis thaliana (Mouse-ear cress).